The sequence spans 199 residues: ATP-dependent Clp protease proteolytic subunit 2 (199 aa).

The Nucleophile role is filled by Ser-98. The active site involves His-123.

This sequence belongs to the peptidase S14 family. As to quaternary structure, fourteen ClpP subunits assemble into 2 heptameric rings which stack back to back to give a disk-like structure with a central cavity, resembling the structure of eukaryotic proteasomes.

It is found in the cytoplasm. The catalysed reaction is Hydrolysis of proteins to small peptides in the presence of ATP and magnesium. alpha-casein is the usual test substrate. In the absence of ATP, only oligopeptides shorter than five residues are hydrolyzed (such as succinyl-Leu-Tyr-|-NHMec, and Leu-Tyr-Leu-|-Tyr-Trp, in which cleavage of the -Tyr-|-Leu- and -Tyr-|-Trp bonds also occurs).. Its function is as follows. Cleaves peptides in various proteins in a process that requires ATP hydrolysis. Has a chymotrypsin-like activity. Plays a major role in the degradation of misfolded proteins. This chain is ATP-dependent Clp protease proteolytic subunit 2, found in Corynebacterium efficiens (strain DSM 44549 / YS-314 / AJ 12310 / JCM 11189 / NBRC 100395).